A 1462-amino-acid polypeptide reads, in one-letter code: FYVE, RhoGEF and PH domain-containing protein 5 (1462 aa).

Disordered regions lie at residues 37–323 (GRLP…SAEE), 492–512 (YVPETVPEETGPEAGSSAPGI), 592–613 (SGSFSQRNHLPSSGTSTPSSMV), 670–718 (HVDV…ASES), 746–777 (EDRSRPPFLPLPLTKPRSISFPSADTSDYENI), and 851–887 (CPISSAAPKEDLTSDEEQRSSEEEDSASRDPSVTHKV). Basic and acidic residues predominate over residues 72–82 (PLREDEPKDEG). Composition is skewed to acidic residues over residues 95-106 (SAEEEEEREEGG) and 137-151 (EGTDLALEDEGEGCA). Over residues 161-177 (SRSEEEEKLVQPHRECS) the composition is skewed to basic and acidic residues. 2 stretches are compositionally biased toward acidic residues: residues 211–220 (GEAEEDDEEG) and 242–255 (MGQDAEDTSEEPPE). Residues 592–611 (SGSFSQRNHLPSSGTSTPSS) show a composition bias toward polar residues. Over residues 676–685 (SSSRSSSESS) the composition is skewed to low complexity. Positions 858-887 (PKEDLTSDEEQRSSEEEDSASRDPSVTHKV) are enriched in basic and acidic residues. The DH domain maps to 892-1084 (RALVIAQELL…SKVTDRANDS (193 aa)). One can recognise a PH 1 domain in the interval 1113–1207 (EFLKEGTLMK…WYGCLSRALP (95 aa)). The FYVE-type zinc-finger motif lies at 1242–1301 (VTHVMMCMNCGCDFSLTLRRHHCHACGKIVCRNCSRNKYPLKYLKDRMAKVCDGCFGELK). The Zn(2+) site is built by C1248, C1251, C1264, C1267, C1272, C1275, C1293, and C1296. Positions 1363-1461 (GSAISGYLSR…WIEAMEDASV (99 aa)) constitute a PH 2 domain.

Expressed in endothelial cells (at protein level).

The protein localises to the cytoplasm. The protein resides in the cytoskeleton. It is found in the cell projection. Its subcellular location is the ruffle membrane. It localises to the endoplasmic reticulum. The protein localises to the golgi apparatus. The protein resides in the early endosome. Activates CDC42, a member of the Ras-like family of Rho- and Rac proteins, by exchanging bound GDP for free GTP. Mediates VEGF-induced CDC42 activation. May regulate proangiogenic action of VEGF in vascular endothelial cells, including network formation, directional movement and proliferation. May play a role in regulating the actin cytoskeleton and cell shape. The sequence is that of FYVE, RhoGEF and PH domain-containing protein 5 (FGD5) from Homo sapiens (Human).